Here is a 316-residue protein sequence, read N- to C-terminus: tRNA dimethylallyltransferase (316 aa).

Position 17–24 (17–24) interacts with ATP; that stretch reads GPTASGKT. Residue 19 to 24 participates in substrate binding; the sequence is TASGKT. Interaction with substrate tRNA stretches follow at residues 42–45, 166–170, and 247–252; these read DSAL, QRLSR, and RCVGYR.

The protein belongs to the IPP transferase family. Monomer. Mg(2+) serves as cofactor.

The catalysed reaction is adenosine(37) in tRNA + dimethylallyl diphosphate = N(6)-dimethylallyladenosine(37) in tRNA + diphosphate. Catalyzes the transfer of a dimethylallyl group onto the adenine at position 37 in tRNAs that read codons beginning with uridine, leading to the formation of N6-(dimethylallyl)adenosine (i(6)A). The protein is tRNA dimethylallyltransferase of Salmonella schwarzengrund (strain CVM19633).